The primary structure comprises 501 residues: ATP synthase subunit alpha (501 aa).

169 to 176 (GDRQTGKT) is a binding site for ATP.

Belongs to the ATPase alpha/beta chains family. F-type ATPases have 2 components, CF(1) - the catalytic core - and CF(0) - the membrane proton channel. CF(1) has five subunits: alpha(3), beta(3), gamma(1), delta(1), epsilon(1). CF(0) has three main subunits: a(1), b(2) and c(9-12). The alpha and beta chains form an alternating ring which encloses part of the gamma chain. CF(1) is attached to CF(0) by a central stalk formed by the gamma and epsilon chains, while a peripheral stalk is formed by the delta and b chains.

The protein localises to the cell inner membrane. The enzyme catalyses ATP + H2O + 4 H(+)(in) = ADP + phosphate + 5 H(+)(out). Produces ATP from ADP in the presence of a proton gradient across the membrane. The alpha chain is a regulatory subunit. This is ATP synthase subunit alpha from Campylobacter jejuni subsp. jejuni serotype O:6 (strain 81116 / NCTC 11828).